We begin with the raw amino-acid sequence, 122 residues long: Large ribosomal subunit protein uL14 (122 aa).

Belongs to the universal ribosomal protein uL14 family. Part of the 50S ribosomal subunit. Forms a cluster with proteins L3 and L19. In the 70S ribosome, L14 and L19 interact and together make contacts with the 16S rRNA in bridges B5 and B8.

Its function is as follows. Binds to 23S rRNA. Forms part of two intersubunit bridges in the 70S ribosome. The chain is Large ribosomal subunit protein uL14 from Polynucleobacter asymbioticus (strain DSM 18221 / CIP 109841 / QLW-P1DMWA-1) (Polynucleobacter necessarius subsp. asymbioticus).